Reading from the N-terminus, the 317-residue chain is MKVLWAALLVTFLAGCQAKVEQPVEPETEPELRQQAEWQSGQPWELALGRFWDYLRWVQTLSEQVQEELLSPQVTQELTTLMDETMKELKAYKSELEEQLSPVAEETRARLSKELQAAQARLGADMEDVRSRLVQYRSELQAMLGQSTEELRARLASHLRKLRKRLLRDADDLQKRLAVYQAGAREGAERGVSAIRERLGPLVEQGRVRAATVGSLASQPLQERAQALGERLRARMEEMGSRTRDRLDEVKEQVAEVRAKLEEQAQQISLQAEAFQARLKSWFEPLVEDMQRQWAGLVEKVQAAVGASTAPVPSDNH.

An N-terminal signal peptide occupies residues 1-18 (MKVLWAALLVTFLAGCQA). Tandem repeats lie at residues 80 to 101 (TLMDETMKELKAYKSELEEQLS), 102 to 123 (PVAEETRARLSKELQAAQARLG), 124 to 145 (ADMEDVRSRLVQYRSELQAMLG), 146 to 167 (QSTEELRARLASHLRKLRKRLL), 168 to 189 (RDADDLQKRLAVYQAGAREGAE), 190 to 211 (RGVSAIRERLGPLVEQGRVRAA), 212 to 233 (TVGSLASQPLQERAQALGERLR), and 234 to 255 (ARMEEMGSRTRDRLDEVKEQVA). The segment at 80–255 (TLMDETMKEL…RLDEVKEQVA (176 aa)) is 8 X 22 AA approximate tandem repeats. Residue Met143 is modified to Methionine sulfoxide. Ser147 carries the phosphoserine modification. Positions 158–168 (HLRKLRKRLLR) are LDL and other lipoprotein receptors binding. 162-165 (LRKR) serves as a coordination point for heparin. The tract at residues 210 to 290 (AATVGSLASQ…SWFEPLVEDM (81 aa)) is lipid-binding and lipoprotein association. Position 229–236 (229–236 (GERLRARM)) interacts with heparin. The homooligomerization stretch occupies residues 266 to 317 (QQISLQAEAFQARLKSWFEPLVEDMQRQWAGLVEKVQAAVGASTAPVPSDNH). A specificity for association with VLDL region spans residues 278–290 (RLKSWFEPLVEDM).

This sequence belongs to the apolipoprotein A1/A4/E family. In terms of assembly, homotetramer. May interact with ABCA1; functionally associated with ABCA1 in the biogenesis of HDLs. May interact with APP/A4 amyloid-beta peptide; the interaction is extremely stable in vitro but its physiological significance is unclear. May interact with MAPT. May interact with MAP2. In the cerebrospinal fluid, interacts with secreted SORL1. Interacts with PMEL; this allows the loading of PMEL luminal fragment on ILVs to induce fibril nucleation. APOE exists as multiple glycosylated and sialylated glycoforms within cells and in plasma. The extent of glycosylation and sialylation are tissue and context specific. Post-translationally, glycated in plasma VLDL. In terms of processing, phosphorylated by FAM20C in the extracellular medium.

The protein resides in the secreted. It localises to the extracellular space. Its subcellular location is the extracellular matrix. The protein localises to the extracellular vesicle. It is found in the endosome. The protein resides in the multivesicular body. In terms of biological role, APOE is an apolipoprotein, a protein associating with lipid particles, that mainly functions in lipoprotein-mediated lipid transport between organs via the plasma and interstitial fluids. APOE is a core component of plasma lipoproteins and is involved in their production, conversion and clearance. Apolipoproteins are amphipathic molecules that interact both with lipids of the lipoprotein particle core and the aqueous environment of the plasma. As such, APOE associates with chylomicrons, chylomicron remnants, very low density lipoproteins (VLDL) and intermediate density lipoproteins (IDL) but shows a preferential binding to high-density lipoproteins (HDL). It also binds a wide range of cellular receptors including the LDL receptor/LDLR, the LDL receptor-related proteins LRP1, LRP2 and LRP8 and the very low-density lipoprotein receptor/VLDLR that mediate the cellular uptake of the APOE-containing lipoprotein particles. Finally, APOE also has a heparin-binding activity and binds heparan-sulfate proteoglycans on the surface of cells, a property that supports the capture and the receptor-mediated uptake of APOE-containing lipoproteins by cells. A main function of APOE is to mediate lipoprotein clearance through the uptake of chylomicrons, VLDLs, and HDLs by hepatocytes. APOE is also involved in the biosynthesis by the liver of VLDLs as well as their uptake by peripheral tissues ensuring the delivery of triglycerides and energy storage in muscle, heart and adipose tissues. By participating in the lipoprotein-mediated distribution of lipids among tissues, APOE plays a critical role in plasma and tissues lipid homeostasis. APOE is also involved in two steps of reverse cholesterol transport, the HDLs-mediated transport of cholesterol from peripheral tissues to the liver, and thereby plays an important role in cholesterol homeostasis. First, it is functionally associated with ABCA1 in the biogenesis of HDLs in tissues. Second, it is enriched in circulating HDLs and mediates their uptake by hepatocytes. APOE also plays an important role in lipid transport in the central nervous system, regulating neuron survival and sprouting. The sequence is that of Apolipoprotein E (APOE) from Theropithecus gelada (Gelada baboon).